The primary structure comprises 541 residues: Glucose-6-phosphate isomerase (541 aa).

Glu-347 functions as the Proton donor in the catalytic mechanism. Catalysis depends on residues His-378 and Lys-506.

The protein belongs to the GPI family.

It is found in the cytoplasm. The enzyme catalyses alpha-D-glucose 6-phosphate = beta-D-fructose 6-phosphate. Its pathway is carbohydrate biosynthesis; gluconeogenesis. It participates in carbohydrate degradation; glycolysis; D-glyceraldehyde 3-phosphate and glycerone phosphate from D-glucose: step 2/4. In terms of biological role, catalyzes the reversible isomerization of glucose-6-phosphate to fructose-6-phosphate. The chain is Glucose-6-phosphate isomerase from Francisella tularensis subsp. holarctica (strain OSU18).